The chain runs to 59 residues: Large ribosomal subunit protein bL32 (59 aa).

The segment covering 1–19 has biased composition (basic residues); it reads MAQPKKKTSKSRRNMRRSH. The segment at 1 to 20 is disordered; that stretch reads MAQPKKKTSKSRRNMRRSHD.

This sequence belongs to the bacterial ribosomal protein bL32 family.

The polypeptide is Large ribosomal subunit protein bL32 (Maridesulfovibrio salexigens (strain ATCC 14822 / DSM 2638 / NCIMB 8403 / VKM B-1763) (Desulfovibrio salexigens)).